The sequence spans 79 residues: U-actitoxin-Avd8b (79 aa).

The signal sequence occupies residues methionine 1–alanine 19. Residues asparagine 20–arginine 36 constitute a propeptide that is removed on maturation.

Belongs to the sea anemone 8 toxin family.

The protein resides in the secreted. It localises to the nematocyst. This is U-actitoxin-Avd8b from Anemonia viridis (Snakelocks anemone).